The sequence spans 250 residues: MGAAASIQTTVNTLSERISSKLEQEANASAQTKCDIEIGNFYIRQNHGCNITVKNMCSADADAQLDAVLSAATETYSGLTPEQKAYVPAMFTAALNIQTSVNTVVRDFENYVKQTCNSSAVVDNKLKIQNVIIDECYGAPGSPTNLEFINTGSSKGNCAIKALMQLTTKATTQIAPRQVAGTGVQFYMIVIGVIILAALFMYYAKRMLFTSTNDKIKLILANKENVHWTTYMDTFFRTSPMIIATTDIQN.

G2 carries the N-myristoyl glycine; by host lipid modification. The targeting to MV membrane stretch occupies residues 2 to 12 (GAAASIQTTVN). Residues 2 to 183 (GAAASIQTTV…IAPRQVAGTG (182 aa)) lie on the Virion surface side of the membrane. Disulfide bonds link C34/C57, C49/C136, and C116/C158. The helical transmembrane segment at 184–204 (VQFYMIVIGVIILAALFMYYA) threads the bilayer. Residues 205–250 (KRMLFTSTNDKIKLILANKENVHWTTYMDTFFRTSPMIIATTDIQN) lie on the Intravirion side of the membrane.

It belongs to the orthopoxvirus OPG095 family. Component of the entry fusion complex (EFC) composed of OPG053, OPG076, OPG086, OPG094, OPG095, OPG099, OPG107, OPG143, OPG104, OPG147 and OPG155. Except for OPG095 and OPG053, each of the EFC proteins is required for assembly or stability of the complex. Post-translationally, myristoylated. In terms of processing, disulfid bonds are oxidized in the cytoplasm by OPG088 protein. Unglycosylated because produced in viral factories instead of the classic ER -Golgi route.

It is found in the virion membrane. In terms of biological role, component of the entry fusion complex (EFC), which consists of 11 proteins. During cell infection, this complex mediates entry of the virion core into the host cytoplasm by a two-step mechanism consisting of lipid mixing of the viral and cellular membranes and subsequent pore formation. This Monkeypox virus protein is Entry-fusion complex associated protein OPG095 (OPG099).